A 415-amino-acid chain; its full sequence is Serine hydroxymethyltransferase (415 aa).

(6S)-5,6,7,8-tetrahydrofolate-binding positions include leucine 122 and 126–128 (GHL). At lysine 230 the chain carries N6-(pyridoxal phosphate)lysine.

Belongs to the SHMT family. Homodimer. Pyridoxal 5'-phosphate serves as cofactor.

The protein localises to the cytoplasm. It catalyses the reaction (6R)-5,10-methylene-5,6,7,8-tetrahydrofolate + glycine + H2O = (6S)-5,6,7,8-tetrahydrofolate + L-serine. It functions in the pathway one-carbon metabolism; tetrahydrofolate interconversion. It participates in amino-acid biosynthesis; glycine biosynthesis; glycine from L-serine: step 1/1. Its function is as follows. Catalyzes the reversible interconversion of serine and glycine with tetrahydrofolate (THF) serving as the one-carbon carrier. This reaction serves as the major source of one-carbon groups required for the biosynthesis of purines, thymidylate, methionine, and other important biomolecules. Also exhibits THF-independent aldolase activity toward beta-hydroxyamino acids, producing glycine and aldehydes, via a retro-aldol mechanism. In Cupriavidus taiwanensis (strain DSM 17343 / BCRC 17206 / CCUG 44338 / CIP 107171 / LMG 19424 / R1) (Ralstonia taiwanensis (strain LMG 19424)), this protein is Serine hydroxymethyltransferase.